Reading from the N-terminus, the 422-residue chain is MRSVLSLALLAANVVTAAVVAPFDYSGYKVIRVPTQKDNVKEVQRIITDLNLDTWKYPKSEGQNADIVVPPSQISSFMERISGMNIEMMHEDLGLSIRNETSFEAYSAGYAPDINWFKSYHSYQDHLSYLQDLQGLFRTRSEYVDAGKSHEGRTIPALHIWGSGGKNSKPAIIFHGTIHAREWITTMVTEYMAWSFLSQYNKNADITSIVDNFDIWIFPIVNPDGFAFTQTSNRLWRKNRQPNPNARCPGRDLNRNYPYQWVGPGSSSNPCSDTYRGAQPGDGTEIKVHIANMKKIAANKGIAMFVDWHSYGQLFMSPYGYSCTARPPTDARHQELSRIFAQALKAVHGTPYKTGPICNTIYQVNGDSVDYALEVLKVKLSLTAELRDTGARGFVLPADQIIPSGEETLAGTVAMLKAVIQG.

A signal peptide spans 1-17 (MRSVLSLALLAANVVTA). Residues 18-112 (AVVAPFDYSG…FEAYSAGYAP (95 aa)) constitute a propeptide, activation peptide. One can recognise a Peptidase M14 domain in the interval 119-419 (SYHSYQDHLS…AGTVAMLKAV (301 aa)). Zn(2+)-binding residues include H179 and E182. Substrate-binding positions include 179–182 (HARE), R237, and 254–255 (NR). C248 and C271 form a disulfide bridge. H309 lines the Zn(2+) pocket. 310–311 (SY) contributes to the substrate binding site. Catalysis depends on E385, which acts as the Proton donor/acceptor.

This sequence belongs to the peptidase M14 family. Zn(2+) is required as a cofactor.

It is found in the secreted. Extracellular metalloprotease that contributes to pathogenicity. The chain is Probable metallocarboxypeptidase A (MCPA) from Arthroderma benhamiae (strain ATCC MYA-4681 / CBS 112371) (Trichophyton mentagrophytes).